The sequence spans 144 residues: Maximins 11/H1 (144 aa).

Residues 1 to 18 (MNFKYIVAVSFLIASAYA) form the signal peptide. Residues 19 to 43 (RSEENDEQSLSQRDVLEEESLREIR) constitute a propeptide that is removed on maturation. Asn70 is subject to Asparagine amide. The propeptide occupies 74–123 (TAEDHEVMKRLEAVMRDLDSLDYPEEASERETRGFNQEEIANLFTKKEKR). Leu143 is modified (leucine amide).

Belongs to the bombinin family. As to expression, expressed by the skin glands.

Its subcellular location is the secreted. In terms of biological role, maximin-11 shows antimicrobial activity against bacteria and against the fungus C.albicans. It has little hemolytic activity. Functionally, maximin-H1 shows antibacterial activity against both Gram-positive and Gram-negative bacteria. It also shows antimicrobial activity against the fungus C.albicans. Shows strong hemolytic activity. The sequence is that of Maximins 11/H1 from Bombina maxima (Giant fire-bellied toad).